Reading from the N-terminus, the 262-residue chain is Granzyme A (262 aa).

Positions 1–26 (MRNSYRFLASSLSVVVSLLLIPEDVC) are cleaved as a signal peptide. Residues 27-28 (EK) constitute a propeptide, activation peptide. In terms of domain architecture, Peptidase S1 spans 29 to 259 (IIGGNEVTPH…HLNWIIMTIK (231 aa)). A disulfide bridge connects residues Cys-54 and Cys-70. Active-site charge relay system residues include His-69 and Asp-114. 3 disulfides stabilise this stretch: Cys-148-Cys-218, Cys-179-Cys-197, and Cys-208-Cys-234. Asn-170 carries an N-linked (GlcNAc...) asparagine glycan. Ser-212 acts as the Charge relay system in catalysis.

It belongs to the peptidase S1 family. Granzyme subfamily. In terms of assembly, homodimer; disulfide-linked. Interacts with APEX1.

Its subcellular location is the secreted. It localises to the cytoplasmic granule. The catalysed reaction is Hydrolysis of proteins, including fibronectin, type IV collagen and nucleolin. Preferential cleavage: -Arg-|-Xaa-, -Lys-|-Xaa- &gt;&gt; -Phe-|-Xaa- in small molecule substrates.. Abundant protease in the cytosolic granules of cytotoxic T-cells and NK-cells which activates caspase-independent pyroptosis when delivered into the target cell through the immunological synapse. It cleaves after Lys or Arg. Once delivered into the target cell, acts by catalyzing cleavage of gasdermin-B (GSDMB), releasing the pore-forming moiety of GSDMB, thereby triggering pyroptosis and target cell death. Cleaves APEX1 after 'Lys-31' and destroys its oxidative repair activity. Cleaves the nucleosome assembly protein SET after 'Lys-189', which disrupts its nucleosome assembly activity and allows the SET complex to translocate into the nucleus to nick and degrade the DNA. The chain is Granzyme A from Homo sapiens (Human).